The primary structure comprises 1245 residues: ABC transporter B family member 13 (1245 aa).

Polar residues predominate over residues 1–14 (MDNTERSSNGNIQA). The tract at residues 1–20 (MDNTERSSNGNIQAETEAKE) is disordered. The ABC transmembrane type-1 1 domain occupies 47–336 (MLLGGLGACI…AAPSLSAIAK (290 aa)). The chain crosses the membrane as a helical span at residues 48-68 (LLGGLGACIHGATLPLFFVFF). Asparagine 77 carries N-linked (GlcNAc...) asparagine glycosylation. 5 helical membrane-spanning segments follow: residues 94–114 (LYLV…VSCW), 171–191 (HVLR…LSVW), 195–215 (LLTL…AIVM), 276–296 (LGVG…LWYA), and 314–334 (ILNV…LSAI). N-linked (GlcNAc...) asparagine glycosylation is found at asparagine 351 and asparagine 391. The region spanning 372 to 607 (IEFQKVSFAY…GGDYATLVNC (236 aa)) is the ABC transporter 1 domain. 406–413 (GPSGSGKS) serves as a coordination point for ATP. The segment covering 610–629 (TEPQENSRSIMSETCKSQAG) has biased composition (polar residues). The disordered stretch occupies residues 610 to 660 (TEPQENSRSIMSETCKSQAGSSSSRRVSSSRRTSSFRVDQEKTKNDDSKKD). The span at 630 to 646 (SSSSRRVSSSRRTSSFR) shows a compositional bias: low complexity. The segment covering 647-660 (VDQEKTKNDDSKKD) has biased composition (basic and acidic residues). The 289-residue stretch at 681–969 (ALLGSIGAVL…TLALTPDIVK (289 aa)) folds into the ABC transmembrane type-1 2 domain. Helical transmembrane passes span 686–706 (IGAV…AYVL) and 725–745 (AIIF…QHYF). N-linked (GlcNAc...) asparagine glycosylation is present at asparagine 778. 4 consecutive transmembrane segments (helical) span residues 805–822 (IVQN…AFFY), 828–848 (AVVT…QLFL), 913–933 (LSQF…SVLI), and 947–967 (FMVL…TPDI). In terms of domain architecture, ABC transporter 2 spans 1004–1240 (IEFRNVSFVY…PNGFYKQLTS (237 aa)). An N-linked (GlcNAc...) asparagine glycan is attached at asparagine 1008. 1039–1046 (GPSGSGKS) contacts ATP. Residue asparagine 1106 is glycosylated (N-linked (GlcNAc...) asparagine).

Belongs to the ABC transporter superfamily. ABCB family. Multidrug resistance exporter (TC 3.A.1.201) subfamily.

It localises to the membrane. The chain is ABC transporter B family member 13 (ABCB13) from Arabidopsis thaliana (Mouse-ear cress).